The chain runs to 805 residues: Shutoff protein (805 aa).

The segment at 1–88 (MESVEKEDSL…QVGRGDQRHG (88 aa)) is disordered. Positions 18–29 (TTASTDAANAPT) are enriched in polar residues. 2 stretches are compositionally biased toward basic and acidic residues: residues 59–70 (RSVPTEDKKQDQ) and 79–88 (QVGRGDQRHG). The segment at 280-345 (VMSELIVRRA…AVLVTVELEC (66 aa)) is binding to host EIF4G. The RRM domain maps to 348 to 466 (RFFADPEMQR…DLWTAFNERS (119 aa)). Phosphotyrosine; by host occurs at positions 365 and 682. The disordered stretch occupies residues 684-805 (DPQSGEELNP…AGTACSPTQP (122 aa)). Gly residues predominate over residues 726–742 (GRGGILGQSGRGGFGRG). Residues 754 to 763 (RSFRGRRGVR) show a composition bias toward basic residues.

Belongs to the adenoviridae shutoff protein family. As to quaternary structure, monomer. Interacts with hexon protein; this interaction allows chaperoning and trimerization of hexon proteins. Interacts (via N-terminus) with host initiation factor EIF4G (via C-terminus). Interacts (via RRM domain) with viral mRNAs that contain the tripartite leader; this interaction allows ribosome shunting and expression of viral late mRNAs. Post-translationally, might be cleaved by the viral protease. In terms of processing, phosphorylated. Tyrosine phosphorylation enhances preferential binding to tripartite leader mRNAs and allows ribosome shunting. Methylated. Asymmetric dimethylation by host PRMT1 of the Arg/Gly-rich region may regulate shutoff protein binding to hexon and promote the capsid assembly in the nucleus.

It localises to the host cytoplasm. Functionally, protein that inhibits host translation while promoting late viral translation by ribosome shunting. Blocks host cap-dependent translation by binding to eIF4G, displacing MKNK1 from cap initiation complexes and preventing EIF4E phosphorylation. Binds to the tripartite leader sequence of viral late mRNAs and recruits host eIF4G, PABPC1/poly-A binding protein and 40S ribosomes subunits on viral mRNAs, allowing ribosome shunting and efficient translation of late viral mRNAs even though conventional translation via ribosome scanning from the cap has been shut off in the host cell. During assembly, acts as a chaperone protein that helps hexon proteins assembly into trimers. This chain is Shutoff protein, found in Homo sapiens (Human).